Here is a 286-residue protein sequence, read N- to C-terminus: MTHNHDPYSDAKELAGLTLGKATDYQAEYDASLLQGVPRSLNRNAINLTAESLPFHGADIWTAYELSWLNAKGKPMVAIADIQLSHESQNLIESKSFKLYLNSFNQTKFDNIDAVQKTLVQDLGECAQGQVTVKIIEPKSFGIQRVVELPGTCIDDLDIEVSDYDFNPDYLENSTDDKQIVAETLNSNLLKSNCLITSQPDWGSVMIRYQGPKIDREKLLRYLISFRQHNEFHEQCVERIFVDLKHYCHCTKLTVYARYTRRGGLDINPYRSDFEHPGESHRLARQ.

92-94 (IES) contacts substrate. An NADPH-binding site is contributed by 94–95 (SK). Cysteine 194 acts as the Thioimide intermediate in catalysis. Catalysis depends on aspartate 201, which acts as the Proton donor. 233-234 (HE) is a substrate binding site. 262-263 (RG) lines the NADPH pocket.

It belongs to the GTP cyclohydrolase I family. QueF type 2 subfamily. As to quaternary structure, homodimer.

The protein localises to the cytoplasm. The enzyme catalyses 7-aminomethyl-7-carbaguanine + 2 NADP(+) = 7-cyano-7-deazaguanine + 2 NADPH + 3 H(+). Its pathway is tRNA modification; tRNA-queuosine biosynthesis. Functionally, catalyzes the NADPH-dependent reduction of 7-cyano-7-deazaguanine (preQ0) to 7-aminomethyl-7-deazaguanine (preQ1). In Shewanella sp. (strain MR-7), this protein is NADPH-dependent 7-cyano-7-deazaguanine reductase.